Reading from the N-terminus, the 241-residue chain is NADPH-dependent FMN reductase ArsH (241 aa).

Position 43-50 (43-50 (SLRTVSYS)) interacts with FMN.

This sequence belongs to the ArsH family. Homotetramer. The cofactor is FMN.

Has NADPH-dependent FMN reductase activity. No activity with NADH. May play a role in resistance to heavy metal toxicity. The protein is NADPH-dependent FMN reductase ArsH of Rhizobium meliloti (strain 1021) (Ensifer meliloti).